The sequence spans 402 residues: S-adenosylmethionine synthase (402 aa).

ATP is bound at residue H17. D19 serves as a coordination point for Mg(2+). E45 lines the K(+) pocket. E58 and Q101 together coordinate L-methionine. Residues 101–111 (QSSDIADGVNE) form a flexible loop region. ATP-binding positions include 177–179 (DAK), 244–245 (RF), D253, 259–260 (RK), A276, and K280. L-methionine is bound at residue D253. K284 is a binding site for L-methionine.

The protein belongs to the AdoMet synthase family. As to quaternary structure, homotetramer; dimer of dimers. It depends on Mg(2+) as a cofactor. K(+) serves as cofactor.

The protein resides in the cytoplasm. The catalysed reaction is L-methionine + ATP + H2O = S-adenosyl-L-methionine + phosphate + diphosphate. Its pathway is amino-acid biosynthesis; S-adenosyl-L-methionine biosynthesis; S-adenosyl-L-methionine from L-methionine: step 1/1. Catalyzes the formation of S-adenosylmethionine (AdoMet) from methionine and ATP. The overall synthetic reaction is composed of two sequential steps, AdoMet formation and the subsequent tripolyphosphate hydrolysis which occurs prior to release of AdoMet from the enzyme. In Lactobacillus johnsonii (strain CNCM I-12250 / La1 / NCC 533), this protein is S-adenosylmethionine synthase.